A 300-amino-acid chain; its full sequence is Protease HtpX homolog (300 aa).

The next 2 membrane-spanning stretches (helical) occupy residues 7–24 and 29–46; these read GILM…GALI and GAII…FTFW. A Zn(2+)-binding site is contributed by histidine 130. Glutamate 131 is an active-site residue. Histidine 134 is a Zn(2+) binding site. The next 2 membrane-spanning stretches (helical) occupy residues 145–165 and 174–194; these read VTAT…FFGG and PMGL…AGLV. A Zn(2+)-binding site is contributed by glutamate 203.

It belongs to the peptidase M48B family. Zn(2+) is required as a cofactor.

The protein localises to the cell inner membrane. The protein is Protease HtpX homolog of Cereibacter sphaeroides (strain ATCC 17029 / ATH 2.4.9) (Rhodobacter sphaeroides).